A 527-amino-acid polypeptide reads, in one-letter code: Baicalin-beta-D-glucuronidase (527 aa).

A signal peptide spans 1–25 (MGFQVWQKGLCVLCFSLIFICGVIG). Glu212 acts as the Proton donor in catalysis. Glu329 serves as the catalytic Nucleophile.

This sequence belongs to the glycosyl hydrolase 79 family. Homotetramer.

It carries out the reaction baicalin + H2O = baicalein + D-glucuronate + H(+). In terms of biological role, beta-glucuronidase involved in the initiation of H(2)O(2) metabolism via the production of baicalein. Unable to use glycyrrhizin, gypsogenin-3-O-D-glucuronide, luteolin-7-O-D-glucoside and apigenin-7-O-D-glucoside as substrates. This Scutellaria baicalensis (Baical skullcap) protein is Baicalin-beta-D-glucuronidase (SGUS).